A 460-amino-acid chain; its full sequence is Hemopexin (460 aa).

The first 23 residues, 1–23, serve as a signal peptide directing secretion; sequence MARTVVALNILVLLGLCWSLAVA. N-linked (GlcNAc...) asparagine glycans are attached at residues Asn-38 and Asn-64. Disulfide bonds link Cys-50–Cys-230, Cys-148–Cys-153, and Cys-187–Cys-199. Hemopexin repeat units follow at residues 53-93, 94-138, 139-183, and 184-230; these read AWSF…WKNP, VTSV…FPGI, PYPP…SWPA, and VGNC…FISC. His-79 lines the heme pocket. His-149 lines the heme pocket. N-linked (GlcNAc...) asparagine glycosylation is present at Asn-186. Residue His-235 coordinates heme. 2 N-linked (GlcNAc...) asparagine glycosylation sites follow: Asn-240 and Asn-246. Intrachain disulfides connect Cys-255–Cys-458, Cys-364–Cys-406, and Cys-416–Cys-433. Hemopexin repeat units follow at residues 257–302, 303–350, 355–394, and 398–448; these read ADPG…WPQG, PSAV…LGSP, LDTI…WAEL, and HEKV…SLPQ. His-291 contributes to the heme binding site.

This sequence belongs to the hemopexin family. In terms of tissue distribution, expressed by the liver and secreted in plasma.

The protein localises to the secreted. In terms of biological role, binds heme and transports it to the liver for breakdown and iron recovery, after which the free hemopexin returns to the circulation. The protein is Hemopexin (Hpx) of Rattus norvegicus (Rat).